Reading from the N-terminus, the 285-residue chain is Bis(5'-nucleosyl)-tetraphosphatase, symmetrical (285 aa).

It belongs to the Ap4A hydrolase family.

It catalyses the reaction P(1),P(4)-bis(5'-adenosyl) tetraphosphate + H2O = 2 ADP + 2 H(+). Functionally, hydrolyzes diadenosine 5',5'''-P1,P4-tetraphosphate to yield ADP. The sequence is that of Bis(5'-nucleosyl)-tetraphosphatase, symmetrical from Pseudomonas entomophila (strain L48).